The chain runs to 405 residues: S-adenosylmethionine synthase (405 aa).

Residue 141–146 (GQGSVD) participates in ATP binding.

This sequence belongs to the AdoMet synthase 2 family. Mg(2+) serves as cofactor.

It catalyses the reaction L-methionine + ATP + H2O = S-adenosyl-L-methionine + phosphate + diphosphate. It participates in amino-acid biosynthesis; S-adenosyl-L-methionine biosynthesis; S-adenosyl-L-methionine from L-methionine: step 1/1. In terms of biological role, catalyzes the formation of S-adenosylmethionine from methionine and ATP. This Methanococcus maripaludis (strain C7 / ATCC BAA-1331) protein is S-adenosylmethionine synthase.